Consider the following 314-residue polypeptide: 4-hydroxy-3-methylbut-2-enyl diphosphate reductase (314 aa).

Cysteine 12 lines the [4Fe-4S] cluster pocket. Residues histidine 41 and histidine 74 each coordinate (2E)-4-hydroxy-3-methylbut-2-enyl diphosphate. 2 residues coordinate dimethylallyl diphosphate: histidine 41 and histidine 74. Isopentenyl diphosphate-binding residues include histidine 41 and histidine 74. A [4Fe-4S] cluster-binding site is contributed by cysteine 96. (2E)-4-hydroxy-3-methylbut-2-enyl diphosphate is bound at residue histidine 124. Residue histidine 124 coordinates dimethylallyl diphosphate. Histidine 124 is a binding site for isopentenyl diphosphate. Catalysis depends on glutamate 126, which acts as the Proton donor. Threonine 168 contributes to the (2E)-4-hydroxy-3-methylbut-2-enyl diphosphate binding site. Cysteine 198 contacts [4Fe-4S] cluster. The (2E)-4-hydroxy-3-methylbut-2-enyl diphosphate site is built by serine 226, serine 227, asparagine 228, and serine 270. 4 residues coordinate dimethylallyl diphosphate: serine 226, serine 227, asparagine 228, and serine 270. Serine 226, serine 227, asparagine 228, and serine 270 together coordinate isopentenyl diphosphate.

This sequence belongs to the IspH family. It depends on [4Fe-4S] cluster as a cofactor.

It catalyses the reaction isopentenyl diphosphate + 2 oxidized [2Fe-2S]-[ferredoxin] + H2O = (2E)-4-hydroxy-3-methylbut-2-enyl diphosphate + 2 reduced [2Fe-2S]-[ferredoxin] + 2 H(+). The enzyme catalyses dimethylallyl diphosphate + 2 oxidized [2Fe-2S]-[ferredoxin] + H2O = (2E)-4-hydroxy-3-methylbut-2-enyl diphosphate + 2 reduced [2Fe-2S]-[ferredoxin] + 2 H(+). It participates in isoprenoid biosynthesis; dimethylallyl diphosphate biosynthesis; dimethylallyl diphosphate from (2E)-4-hydroxy-3-methylbutenyl diphosphate: step 1/1. Its pathway is isoprenoid biosynthesis; isopentenyl diphosphate biosynthesis via DXP pathway; isopentenyl diphosphate from 1-deoxy-D-xylulose 5-phosphate: step 6/6. Catalyzes the conversion of 1-hydroxy-2-methyl-2-(E)-butenyl 4-diphosphate (HMBPP) into a mixture of isopentenyl diphosphate (IPP) and dimethylallyl diphosphate (DMAPP). Acts in the terminal step of the DOXP/MEP pathway for isoprenoid precursor biosynthesis. The chain is 4-hydroxy-3-methylbut-2-enyl diphosphate reductase from Pseudomonas fluorescens (strain Pf0-1).